The chain runs to 512 residues: Histidine ammonia-lyase (512 aa).

The segment at residues 141-143 (ASG) is a cross-link (5-imidazolinone (Ala-Gly)). Ser-142 is subject to 2,3-didehydroalanine (Ser).

This sequence belongs to the PAL/histidase family. Contains an active site 4-methylidene-imidazol-5-one (MIO), which is formed autocatalytically by cyclization and dehydration of residues Ala-Ser-Gly.

The protein localises to the cytoplasm. It catalyses the reaction L-histidine = trans-urocanate + NH4(+). Its pathway is amino-acid degradation; L-histidine degradation into L-glutamate; N-formimidoyl-L-glutamate from L-histidine: step 1/3. In Bacillus velezensis (strain DSM 23117 / BGSC 10A6 / LMG 26770 / FZB42) (Bacillus amyloliquefaciens subsp. plantarum), this protein is Histidine ammonia-lyase.